The chain runs to 611 residues: MARNFLLVLLWFIVQVSSSHENGRGDQALSQIDIYAINLAQHHSAFIHVSPLVLGSQGQDTEWVNVVISNPEPSSDDWVGVFSPAKFDSSSCAPTDDKEIAPFICSAPVKYMYAKSSPDYMKTGNAVLKFMLINQRADFSFALFTGGLSNPTLVSVSNHVSFINPKAPVYPRLALGKKWDEMTVTWTSGYNIGEAVPFVEWSRKGTRSRRSPAGTLTFTRNSMCGAPARTVGWRDPGFIHTASLKDLWPNLKYTYRMGHELMNGSIVWSKNFTFKSSPYPGQDSLQRVIIFGDMGKGERDGSNEYNDYQPGSLNTTDQLIKDLKNIDIVFHIGDITYANGYISQWDQFTAQVEPIASTVPYMVASGNHERDWPDSGSFYGGKDSGGECGVPAETMFDFPAENKAKFWYSADYGMFRFCVADTEHDWREGSEQYQFIERCLASVDRRAQPWLIFIAHRVLGYSTNDWYGQEGSFEEPMGRESLQKLWQKYKVDIAFYGHVHNYERTCPIYQNQCMDNEKSHYSGAFKGTIHVVVGGAGSHLSSFSSLKPKWSIFRDYDYGFVKLTAFDHSSLLFEYKKSSNGAVHDSFTIFREYRDVLACVRDSCEPTTLAS.

The first 18 residues, 1–18, serve as a signal peptide directing secretion; the sequence is MARNFLLVLLWFIVQVSS. Residues Asn-263 and Asn-271 are each glycosylated (N-linked (GlcNAc...) asparagine). Position 293 (Asp-293) interacts with Fe cation. Asn-314 carries N-linked (GlcNAc...) asparagine glycosylation. Fe cation contacts are provided by Asp-334 and Tyr-337. Asp-334 contacts Zn(2+). 3 residues coordinate Zn(2+): Asn-367, His-456, and His-498. A substrate-binding site is contributed by Asn-367. 498–500 lines the substrate pocket; that stretch reads HVH. His-500 contacts Fe cation.

The protein belongs to the metallophosphoesterase superfamily. Purple acid phosphatase family. As to quaternary structure, homodimer. Fe cation is required as a cofactor. Zn(2+) serves as cofactor. As to expression, expressed in roots, stems, leaves, flowers and siliques.

The protein localises to the secreted. The polypeptide is Probable inactive purple acid phosphatase 27 (PAP27) (Arabidopsis thaliana (Mouse-ear cress)).